The primary structure comprises 428 residues: Sialidase-3 (428 aa).

The short motif at 24–27 is the FRIP motif element; sequence YRIP. Substrate contacts are provided by arginine 25 and arginine 45. The active-site Proton acceptor is aspartate 50. Residues 129-140 form a BNR 1 repeat; that stretch reads IYSQDAGCSWSE. Substrate contacts are provided by tyrosine 179 and tyrosine 181. One copy of the BNR 2 repeat lies at 203–214; it reads IYSDDLGVTWHH. Positions 225 and 245 each coordinate substrate. Residues 254–265 form a BNR 3 repeat; it reads ALSTDHGEGFQR. The interval 294–318 is disordered; it reads RCQDSSSKDAPTIQQSSPGSSLRLE. Residues 301 to 313 show a composition bias toward polar residues; it reads KDAPTIQQSSPGS. At serine 313 the chain carries Phosphoserine. Residue arginine 340 coordinates substrate. The Nucleophile role is filled by tyrosine 370. Glutamate 387 is a catalytic residue.

The protein belongs to the glycosyl hydrolase 33 family. In terms of assembly, interacts with CAV1; this interaction enhances NEU3 sialidase activity within caveola. Interacts with EGFR; this interaction mediates desialylation of EGFR and enhances downstream signaling. Post-translationally, palmitoylated; may regulate intracellular trafficking and anchorage to plasma membrane and endomembranes. As to expression, highly expressed in skeletal muscle, testis, adrenal gland and thymus, followed by pancreas, liver, heart and thymus. Weakly expressed in kidney, placenta, brain and lung.

Its subcellular location is the cell membrane. It is found in the membrane. It localises to the caveola. The protein localises to the early endosome membrane. The protein resides in the recycling endosome membrane. Its subcellular location is the lysosome membrane. The enzyme catalyses Hydrolysis of alpha-(2-&gt;3)-, alpha-(2-&gt;6)-, alpha-(2-&gt;8)- glycosidic linkages of terminal sialic acid residues in oligosaccharides, glycoproteins, glycolipids, colominic acid and synthetic substrates.. The catalysed reaction is a ganglioside GD1a + H2O = a ganglioside GM1 + N-acetylneuraminate. It catalyses the reaction a ganglioside GD1a (d18:1(4E)) + H2O = a ganglioside GM1 (d18:1(4E)) + N-acetylneuraminate. It carries out the reaction a ganglioside GD1b + H2O = a ganglioside GM1 + N-acetylneuraminate. The enzyme catalyses a ganglioside GD1b (d18:1(4E)) + H2O = a ganglioside GM1 (d18:1(4E)) + N-acetylneuraminate. The catalysed reaction is a ganglioside GD3 + H2O = a ganglioside GM3 + N-acetylneuraminate. It catalyses the reaction a ganglioside GD3 (d18:1(4E)) + H2O = a ganglioside GM3 (d18:1(4E)) + N-acetylneuraminate. It carries out the reaction a ganglioside GM3 + H2O = a beta-D-galactosyl-(1-&gt;4)-beta-D-glucosyl-(1&lt;-&gt;1)-ceramide + N-acetylneuraminate. The enzyme catalyses a ganglioside GM1 + H2O = a ganglioside GA1 + N-acetylneuraminate. The catalysed reaction is a ganglioside GM1 (d18:1(4E)) + H2O = a ganglioside GA1 (d18:1(4E)) + N-acetylneuraminate. It catalyses the reaction a ganglioside GM2 (d18:1(4E)) + H2O = a ganglioside GA2 (d18:1(4E)) + N-acetylneuraminate. It carries out the reaction a ganglioside GM3 (d18:1(4E)) + H2O = a beta-D-Gal-(1-&gt;4)-beta-D-Glc-(1&lt;-&gt;1)-Cer(d18:1(4E)) + N-acetylneuraminate. The enzyme catalyses a ganglioside GT1b + H2O = a ganglioside GD1b + N-acetylneuraminate. Functionally, exo-alpha-sialidase that catalyzes the hydrolytic cleavage of the terminal sialic acid (N-acetylneuraminic acid, Neu5Ac) of a glycan moiety in the catabolism of glycolipids, glycoproteins and oligosacharides. Displays high catalytic efficiency for gangliosides including alpha-(2-&gt;3)-sialylated GD1a and GM3 and alpha-(2-&gt;8)-sialylated GD3. Plays a role in the regulation of transmembrane signaling through the modulation of ganglioside content of the lipid bilayer and by direct interaction with signaling receptors, such as EGFR. Desialylates EGFR and activates downstream signaling in proliferating cells. Contributes to clathrin-mediated endocytosis by regulating sorting of endocytosed receptors to early and recycling endosomes. This is Sialidase-3 (NEU3) from Homo sapiens (Human).